The sequence spans 99 residues: MMAMNEIELMQIKDFVKDMDKNQRIVYYEQKKKSVGIAVLLSFIIPGAGQMYLGRVGKGIILLLTCWLIIPWIYSIYDAYKSAKDYNAQLYSIIFSKDD.

A TM2 domain is found at 32–79; it reads KKSVGIAVLLSFIIPGAGQMYLGRVGKGIILLLTCWLIIPWIYSIYDA. 2 helical membrane passes run 34 to 54 and 56 to 76; these read SVGIAVLLSFIIPGAGQMYLG and VGKGIILLLTCWLIIPWIYSI.

It is found in the cell membrane. This is an uncharacterized protein from Methanocaldococcus jannaschii (strain ATCC 43067 / DSM 2661 / JAL-1 / JCM 10045 / NBRC 100440) (Methanococcus jannaschii).